The primary structure comprises 479 residues: U3 snoRNP-associated protein-like EMB2271 (479 aa).

Residues 1–73 (MKLEKKKGIG…AHETVGEKRK (73 aa)) are disordered. Over residues 8-17 (GIGAKRRGKK) the composition is skewed to basic residues. The segment covering 18–38 (SSIDHDPFLEEETEKRRKFNY) has biased composition (basic and acidic residues). Positions 39–51 (DDDDDIESVESEE) are enriched in acidic residues. Residues 52 to 73 (EGKVGEEVEDEFAHETVGEKRK) are compositionally biased toward basic and acidic residues. WD repeat units lie at residues 143-182 (KHQH…SDEY), 204-243 (RHNK…HVQA), 246-285 (GHCG…YIES), 288-326 (GHQS…RLIY), 328-366 (ASES…PVFI), 386-425 (PACS…SAIQ), and 431-471 (PLPG…QNGV).

It belongs to the WD repeat RRP9 family.

Its subcellular location is the nucleus. It is found in the nucleolus. Its function is as follows. Component of a nucleolar small nuclear ribonucleoprotein particle (snoRNP) thought to participate in the processing and modification of pre-ribosomal RNA. Essential for embryogenesis. May function during late embryogenesis. This is U3 snoRNP-associated protein-like EMB2271 from Arabidopsis thaliana (Mouse-ear cress).